The following is a 156-amino-acid chain: 6,7-dimethyl-8-ribityllumazine synthase (156 aa).

5-amino-6-(D-ribitylamino)uracil-binding positions include Phe-23, 57–59 (AYE), and 81–83 (AII). (2S)-2-hydroxy-3-oxobutyl phosphate is bound at residue 86–87 (GT). Catalysis depends on His-89, which acts as the Proton donor. Phe-114 contributes to the 5-amino-6-(D-ribitylamino)uracil binding site. (2S)-2-hydroxy-3-oxobutyl phosphate is bound at residue Arg-128.

This sequence belongs to the DMRL synthase family.

It carries out the reaction (2S)-2-hydroxy-3-oxobutyl phosphate + 5-amino-6-(D-ribitylamino)uracil = 6,7-dimethyl-8-(1-D-ribityl)lumazine + phosphate + 2 H2O + H(+). It participates in cofactor biosynthesis; riboflavin biosynthesis; riboflavin from 2-hydroxy-3-oxobutyl phosphate and 5-amino-6-(D-ribitylamino)uracil: step 1/2. Catalyzes the formation of 6,7-dimethyl-8-ribityllumazine by condensation of 5-amino-6-(D-ribitylamino)uracil with 3,4-dihydroxy-2-butanone 4-phosphate. This is the penultimate step in the biosynthesis of riboflavin. This Helicobacter pylori (strain Shi470) protein is 6,7-dimethyl-8-ribityllumazine synthase.